The primary structure comprises 191 residues: uncharacterized protein (191 aa).

An HTH tetR-type domain is found at 6–66; it reads GLTQKMIVDA…ELAVRGLTKL (61 aa). A DNA-binding region (H-T-H motif) is located at residues 29–48; sequence SLAALSKKMNVRPPSLYNHI.

This is an uncharacterized protein from Bacillus subtilis (strain 168).